Consider the following 212-residue polypeptide: Pyridoxine/pyridoxamine 5'-phosphate oxidase (212 aa).

Residues Arg-61–Lys-66, Phe-76–Thr-77, Lys-82, Lys-83, and Gln-105 contribute to the FMN site. Lys-66 is a substrate binding site. Residues Tyr-123, Arg-127, and Ser-131 each coordinate substrate. Residues Gln-140 to Ser-141 and Trp-185 contribute to the FMN site. Arg-191–His-193 contacts substrate. Position 195 (Arg-195) interacts with FMN.

The protein belongs to the pyridoxamine 5'-phosphate oxidase family. In terms of assembly, homodimer. Requires FMN as cofactor.

The enzyme catalyses pyridoxamine 5'-phosphate + O2 + H2O = pyridoxal 5'-phosphate + H2O2 + NH4(+). The catalysed reaction is pyridoxine 5'-phosphate + O2 = pyridoxal 5'-phosphate + H2O2. It participates in cofactor metabolism; pyridoxal 5'-phosphate salvage; pyridoxal 5'-phosphate from pyridoxamine 5'-phosphate: step 1/1. Its pathway is cofactor metabolism; pyridoxal 5'-phosphate salvage; pyridoxal 5'-phosphate from pyridoxine 5'-phosphate: step 1/1. In terms of biological role, catalyzes the oxidation of either pyridoxine 5'-phosphate (PNP) or pyridoxamine 5'-phosphate (PMP) into pyridoxal 5'-phosphate (PLP). The chain is Pyridoxine/pyridoxamine 5'-phosphate oxidase from Vesicomyosocius okutanii subsp. Calyptogena okutanii (strain HA).